Here is a 498-residue protein sequence, read N- to C-terminus: Cytochrome P450 monooxygenase astB (498 aa).

Residues 7–27 (FTTMPVVLLVGLVLYQLLAFT) traverse the membrane as a helical segment. N-linked (GlcNAc...) asparagine glycans are attached at residues Asn237, Asn248, and Asn346. Cys425 contributes to the heme binding site.

Belongs to the cytochrome P450 family. Heme serves as cofactor.

The protein resides in the membrane. The enzyme catalyses preasperterpenoid A + 4 reduced [NADPH--hemoprotein reductase] + 4 O2 = asperterpenoid A + 4 oxidized [NADPH--hemoprotein reductase] + 5 H2O + 5 H(+). It carries out the reaction asperterpenoid A + 2 reduced [NADPH--hemoprotein reductase] + 2 O2 = asperterpenoid B + 2 oxidized [NADPH--hemoprotein reductase] + 3 H2O + 3 H(+). Its pathway is secondary metabolite biosynthesis; terpenoid biosynthesis. Its function is as follows. Cytochrome P450 monooxygenase; part of the gene cluster that mediates the biosynthesis of the asperterpenoids, sesterterpenes that exhibit anti-tuberculosis activity. The first step of the pathway is performed by the sesterterpene synthase astC that possesses both prenyl transferase and terpene cyclase activity, converting isopentenyl diphosphate and dimethylallyl diphosphate into geranylfarnesyl diphosphate (GFPP) and further converting GFPP into preasperterpenoid A, respectively. The cytochrome P450 monooxygenase astB then dually oxidizes preasperterpenoid A to produce asperterpenoid A along with a minor product, asperterpenoid B. Finally, the cytochrome P450 monooxygenase astA converts asperterpenoid A into asperterpenoid C. This chain is Cytochrome P450 monooxygenase astB, found in Talaromyces wortmannii (Penicillium wortmannii).